The sequence spans 141 residues: Large ribosomal subunit protein uL23A (141 aa).

Phosphoserine occurs at positions 68 and 70.

It belongs to the universal ribosomal protein uL23 family. Component of the large ribosomal subunit (LSU). Mature yeast ribosomes consist of a small (40S) and a large (60S) subunit. The 40S small subunit contains 1 molecule of ribosomal RNA (18S rRNA) and at least 33 different proteins. The large 60S subunit contains 3 rRNA molecules (25S, 5.8S and 5S rRNA) and at least 46 different proteins. uL23 is associated with the polypeptide exit tunnel.

Its subcellular location is the cytoplasm. Its function is as follows. This protein binds to a specific region on the 26S rRNA. Functionally, component of the ribosome, a large ribonucleoprotein complex responsible for the synthesis of proteins in the cell. The small ribosomal subunit (SSU) binds messenger RNAs (mRNAs) and translates the encoded message by selecting cognate aminoacyl-transfer RNA (tRNA) molecules. The large subunit (LSU) contains the ribosomal catalytic site termed the peptidyl transferase center (PTC), which catalyzes the formation of peptide bonds, thereby polymerizing the amino acids delivered by tRNAs into a polypeptide chain. The nascent polypeptides leave the ribosome through a tunnel in the LSU and interact with protein factors that function in enzymatic processing, targeting, and the membrane insertion of nascent chains at the exit of the ribosomal tunnel. uL23 is a major component of the universal docking site for these factors at the polypeptide exit tunnel. The polypeptide is Large ribosomal subunit protein uL23A (rpl2501) (Schizosaccharomyces pombe (strain 972 / ATCC 24843) (Fission yeast)).